Consider the following 444-residue polypeptide: MPCDRKTSPDQHHALQIHRHHHRRKIRARVDAMQSWSAPSVPALPGRGPQLRLFDSADRQIRPVSPGATATMYVCGITPYDATHLGHAATYLTFDLVNRVWRDSGHDVHYVQNITDVDDPLFERAARDGIGWRELGDRETDLFREDMAALRVVPPRDYVAATEAIAEVIEVVEKLLASGAAYVVDDAQYPDVYFHAGATVQFGYESGYDRETMLALFAERGGDPDRPGKSDPLDALLWRAERPEEPSWPSPFGPGRPGWHVECAAIAMTRIGNVLDIQGGGSDLIFPHHEFSSAHAECVSGERRFARHYVHAGMIGWDGHKMSKSRGNLVLVSQLRRDGVDPGAIRLGLFAGHYRQDRYWSPAVLDEAQQRLHRWRSATALDGAPDATDVVARVRRYLADDLDTPKALAAIDGWAEDTLSYGGHDRTAGPTVSAAVDALLGVAL.

Residues 1–13 (MPCDRKTSPDQHH) show a composition bias toward basic and acidic residues. Positions 1–21 (MPCDRKTSPDQHHALQIHRHH) are disordered. Cys-75 is a binding site for Zn(2+). Residues 75-78 (CGIT), Thr-90, and 113-115 (NIT) each bind L-cysteinyl-5'-AMP. A 'HIGH' region motif is present at residues 77–87 (ITPYDATHLGH). Residues 219 to 224 (ERGGDP) carry the 'ERGGDP' region motif. Trp-259 is an L-cysteinyl-5'-AMP binding site. Residue Cys-263 coordinates Zn(2+). L-cysteinyl-5'-AMP is bound at residue 281–283 (GSD). His-288 contributes to the Zn(2+) binding site. Ile-315 is a binding site for L-cysteinyl-5'-AMP. Residues 321–325 (KMSKS) carry the 'KMSKS' region motif.

Belongs to the class-I aminoacyl-tRNA synthetase family. MshC subfamily. Monomer. Zn(2+) serves as cofactor.

The catalysed reaction is 1D-myo-inositol 2-amino-2-deoxy-alpha-D-glucopyranoside + L-cysteine + ATP = 1D-myo-inositol 2-(L-cysteinylamino)-2-deoxy-alpha-D-glucopyranoside + AMP + diphosphate + H(+). Catalyzes the ATP-dependent condensation of GlcN-Ins and L-cysteine to form L-Cys-GlcN-Ins. The protein is L-cysteine:1D-myo-inositol 2-amino-2-deoxy-alpha-D-glucopyranoside ligase of Mycolicibacterium gilvum (strain PYR-GCK) (Mycobacterium gilvum (strain PYR-GCK)).